An 85-amino-acid chain; its full sequence is U4-theraphotoxin-Hhn1a (85 aa).

The N-terminal stretch at 1 to 22 (MKMTLIAILTCAAVLVLHTTAA) is a signal peptide. A propeptide spanning residues 23 to 48 (EELEAESQLMEVGMPDTELEAVDEER) is cleaved from the precursor. 3 disulfide bridges follow: C52–C66, C56–C77, and C71–C82.

This sequence belongs to the neurotoxin 12 (Hwtx-2) family. 02 (Hwtx-2) subfamily. In terms of assembly, monomer. As to expression, expressed by the venom gland.

It localises to the secreted. Its function is as follows. Neurotoxin active on both insects and mammals. The chain is U4-theraphotoxin-Hhn1a from Cyriopagopus hainanus (Chinese bird spider).